A 182-amino-acid chain; its full sequence is PRKR-interacting protein 1 homolog (182 aa).

3 stretches are compositionally biased toward basic and acidic residues: residues 1 to 18 (MAVENKDARPGKALKKES), 27 to 43 (PAEEQRLKLERLMRNPD), and 114 to 124 (IENQKAAEDRT). Disordered stretches follow at residues 1-80 (MAVE…GEFH) and 114-182 (IENQ…MGKR). The segment at 51-143 (KPKEWNPRAP…LKQKKLMAKK (93 aa)) is required for RNA-binding. Residues 99 to 157 (LSEKQKLDEEYKEKLIENQKAAEDRTAKRRKKREKLKQKKLMAKKAKMESQKEEDSEKS) are a coiled coil. Over residues 125 to 143 (AKRRKKREKLKQKKLMAKK) the composition is skewed to basic residues. Positions 126–138 (KRRKKREKLKQKK) are required for nuclear localization. The segment covering 144–156 (AKMESQKEEDSEK) has biased composition (basic and acidic residues). Acidic residues predominate over residues 164 to 173 (EGEEKDDDAE).

This sequence belongs to the PRKRIP1 family. As to quaternary structure, component of the pre-catalytic and post-catalytic spliceosome complexes.

It is found in the nucleus. The protein resides in the nucleolus. In terms of biological role, required for pre-mRNA splicing as component of the spliceosome. Binds double-stranded RNA. This chain is PRKR-interacting protein 1 homolog (prkrip1), found in Danio rerio (Zebrafish).